A 168-amino-acid polypeptide reads, in one-letter code: Ubiquitin-fold modifier-conjugating enzyme 1 (168 aa).

The active-site Glycyl thioester intermediate is the cysteine 119.

Belongs to the ubiquitin-conjugating enzyme family. UFC1 subfamily.

Its function is as follows. E2-like enzyme which forms an intermediate with UFM1 via a thioester linkage. This Drosophila grimshawi (Hawaiian fruit fly) protein is Ubiquitin-fold modifier-conjugating enzyme 1.